The chain runs to 295 residues: Cop9 signalosome-interactor 1 (295 aa).

Component of a COP9 signalosome-like (CSN) complex, composed of RRI1/CSN5, CSN9, RRI2/CSN10, PCI8/CSN11, CSN12 and CSI1. In the complex, it probably interacts directly with CSN9 and CSN12. Interacts also with RPN5.

It localises to the cytoplasm. The protein localises to the nucleus. In terms of biological role, component of the COP9 signalosome (CSN) complex that acts as an regulator of the ubiquitin (Ubl) conjugation pathway by mediating the deneddylation of the cullin subunit of SCF-type E3 ubiquitin-protein ligase complexes The CSN complex is involved in the regulation of the mating pheromone response. This is Cop9 signalosome-interactor 1 (CSI1) from Saccharomyces cerevisiae (strain ATCC 204508 / S288c) (Baker's yeast).